A 294-amino-acid polypeptide reads, in one-letter code: Probable 2-(5''-triphosphoribosyl)-3'-dephosphocoenzyme-A synthase (294 aa).

The protein belongs to the CitG/MdcB family.

It carries out the reaction 3'-dephospho-CoA + ATP = 2'-(5''-triphospho-alpha-D-ribosyl)-3'-dephospho-CoA + adenine. The sequence is that of Probable 2-(5''-triphosphoribosyl)-3'-dephosphocoenzyme-A synthase from Streptococcus pyogenes serotype M2 (strain MGAS10270).